Consider the following 146-residue polypeptide: Ribonuclease H (146 aa).

The region spanning 1 to 141 (MKKVQLITDG…CDELATRAAR (141 aa)) is the RNase H type-1 domain. Asp9, Glu47, Asp69, and Asp133 together coordinate Mg(2+).

Belongs to the RNase H family. In terms of assembly, monomer. Requires Mg(2+) as cofactor.

The protein resides in the cytoplasm. The catalysed reaction is Endonucleolytic cleavage to 5'-phosphomonoester.. Its function is as follows. Endonuclease that specifically degrades the RNA of RNA-DNA hybrids. The sequence is that of Ribonuclease H from Solibacter usitatus (strain Ellin6076).